The following is a 388-amino-acid chain: Succinate--CoA ligase [ADP-forming] subunit beta (388 aa).

The ATP-grasp domain maps to 9–244 (KEILRKFGVA…LDEEDPAEIE (236 aa)). Residues Lys-46, 53–55 (GRG), Glu-99, Ala-102, and Glu-107 each bind ATP. The Mg(2+) site is built by Asn-199 and Asp-213. Substrate-binding positions include Asn-264 and 321–323 (GIM).

It belongs to the succinate/malate CoA ligase beta subunit family. Heterotetramer of two alpha and two beta subunits. The cofactor is Mg(2+).

The enzyme catalyses succinate + ATP + CoA = succinyl-CoA + ADP + phosphate. It catalyses the reaction GTP + succinate + CoA = succinyl-CoA + GDP + phosphate. It functions in the pathway carbohydrate metabolism; tricarboxylic acid cycle; succinate from succinyl-CoA (ligase route): step 1/1. Its function is as follows. Succinyl-CoA synthetase functions in the citric acid cycle (TCA), coupling the hydrolysis of succinyl-CoA to the synthesis of either ATP or GTP and thus represents the only step of substrate-level phosphorylation in the TCA. The beta subunit provides nucleotide specificity of the enzyme and binds the substrate succinate, while the binding sites for coenzyme A and phosphate are found in the alpha subunit. This chain is Succinate--CoA ligase [ADP-forming] subunit beta, found in Burkholderia mallei (strain NCTC 10247).